Here is a 61-residue protein sequence, read N- to C-terminus: Chromatin protein Cren7 (61 aa).

It belongs to the Cren7 family. In terms of assembly, monomer. Methylated at multiple sites, to varying extents.

It is found in the chromosome. The protein resides in the cytoplasm. Its function is as follows. A chromatin protein, binds double-stranded DNA without sequence specificity. Constrains negative DNA supercoils. The chain is Chromatin protein Cren7 from Caldivirga maquilingensis (strain ATCC 700844 / DSM 13496 / JCM 10307 / IC-167).